The chain runs to 778 residues: Endonuclease MutS2 (778 aa).

Gly-328 to Thr-335 provides a ligand contact to ATP. The Smr domain occupies Leu-702 to Lys-777.

Belongs to the DNA mismatch repair MutS family. MutS2 subfamily. In terms of assembly, homodimer. Binds to stalled ribosomes, contacting rRNA.

Functionally, endonuclease that is involved in the suppression of homologous recombination and thus may have a key role in the control of bacterial genetic diversity. In terms of biological role, acts as a ribosome collision sensor, splitting the ribosome into its 2 subunits. Detects stalled/collided 70S ribosomes which it binds and splits by an ATP-hydrolysis driven conformational change. Acts upstream of the ribosome quality control system (RQC), a ribosome-associated complex that mediates the extraction of incompletely synthesized nascent chains from stalled ribosomes and their subsequent degradation. Probably generates substrates for RQC. The polypeptide is Endonuclease MutS2 (Streptococcus pneumoniae (strain CGSP14)).